Here is a 295-residue protein sequence, read N- to C-terminus: Taste receptor type 2 member 120 (295 aa).

Over 1-5 (MDLTE) the chain is Extracellular. The helical transmembrane segment at 6–26 (WIVTIIMMIEFLLGNCANFFI) threads the bilayer. Residues 27–45 (MVVNAIDCMKRRKISSADR) lie on the Cytoplasmic side of the membrane. Residues 46-66 (IITALAISRIGLLWAMLMNWH) traverse the membrane as a helical segment. The Extracellular segment spans residues 67-83 (SRVYTTDTYSFQVTAFS). Residues 84 to 104 (GIIWAITNHFTTWLGTILSMF) form a helical membrane-spanning segment. Residues 105–125 (YLFKIANFSNCLFLHLKRKLD) are Cytoplasmic-facing. A helical transmembrane segment spans residues 126–146 (SVLLVIFLVSSLLVFAYLGVV). At 147-177 (NIKKIAWLSVHEGNVTVKSKLMNIASIRDTL) the chain is on the extracellular side. Asn-160 carries N-linked (GlcNAc...) asparagine glycosylation. The chain crosses the membrane as a helical span at residues 178 to 198 (LFSLINIAPFGISLTCVLLLI). The Cytoplasmic portion of the chain corresponds to 199 to 230 (YSLGKHLKNMKFYGKGCQDQSTMVHIRALQTV). The chain crosses the membrane as a helical span at residues 231–251 (VSFLLLYATYSSCVIISGWSI). Over 252–255 (QNVP) the chain is Extracellular. Residues 256–276 (IFLFCVTIGAFYPAGHSCILI) traverse the membrane as a helical segment. Residues 277 to 295 (WGNQKLKQFLLLFLRQMKC) are Cytoplasmic-facing.

This sequence belongs to the G-protein coupled receptor T2R family.

The protein localises to the membrane. In terms of biological role, putative taste receptor which may play a role in the perception of bitterness. In Rattus norvegicus (Rat), this protein is Taste receptor type 2 member 120.